The following is a 330-amino-acid chain: Lymphocyte-specific protein 1 (330 aa).

2 stretches are compositionally biased toward basic and acidic residues: residues 1–20 and 37–62; these read MAEA…HAED and AREQ…DGGH. Disordered stretches follow at residues 1–246 and 281–302; these read MAEA…SIEL and DMSK…TIKS. The span at 66-77 shows a compositional bias: polar residues; that stretch reads QPGQQTLISLKS. Phosphoserine; by CK2 occurs at positions 77 and 78. Residues 113 to 135 are compositionally biased toward basic and acidic residues; it reads QSERPEEKQTEESSHQAKVHLEE. Phosphothreonine is present on threonine 166. Serine 168, serine 179, serine 180, and serine 184 each carry phosphoserine. Composition is skewed to polar residues over residues 206-215 and 223-242; these read VKKSQPTLPI and QQYT…SRQP. Serine 243 is subject to Phosphoserine; by MAPKAPK2. The span at 291 to 302 shows a compositional bias: low complexity; that stretch reads KGGSKISSTIKS. The residue at position 318 (lysine 318) is an N6-acetyllysine.

In terms of processing, phosphorylated by casein kinase II, protein kinase C and MAPKAPK2. Phosphorylation by PKC induces translocation from membrane to cytoplasm. Phosphorylation by MAPKAPK2 may regulate neutrophil chemotaxis. As to expression, isoform 1 is expressed in normal mouse B and T-lymphocytes and in transformed B-cells but not (or in smaller amounts) in nine T-lymphoma lines tested. Isoform 2 is expressed in non-lymphoid cell lines (myocytes, stromal cells, fibroblasts).

Its subcellular location is the cell membrane. Its function is as follows. May play a role in mediating neutrophil activation and chemotaxis. The sequence is that of Lymphocyte-specific protein 1 (Lsp1) from Mus musculus (Mouse).